Reading from the N-terminus, the 475-residue chain is Ribulose bisphosphate carboxylase large chain (475 aa).

Positions 1 to 2 are excised as a propeptide; the sequence is MS. Proline 3 is modified (N-acetylproline). Lysine 14 carries the post-translational modification N6,N6,N6-trimethyllysine. Asparagine 123 and threonine 173 together coordinate substrate. The active-site Proton acceptor is the lysine 175. Position 177 (lysine 177) interacts with substrate. Lysine 201, aspartate 203, and glutamate 204 together coordinate Mg(2+). Lysine 201 is modified (N6-carboxylysine). The Proton acceptor role is filled by histidine 294. The substrate site is built by arginine 295, histidine 327, and serine 379.

Belongs to the RuBisCO large chain family. Type I subfamily. In terms of assembly, heterohexadecamer of 8 large chains and 8 small chains; disulfide-linked. The disulfide link is formed within the large subunit homodimers. Mg(2+) is required as a cofactor. Post-translationally, the disulfide bond which can form in the large chain dimeric partners within the hexadecamer appears to be associated with oxidative stress and protein turnover.

It is found in the plastid. The protein localises to the chloroplast. It carries out the reaction 2 (2R)-3-phosphoglycerate + 2 H(+) = D-ribulose 1,5-bisphosphate + CO2 + H2O. The enzyme catalyses D-ribulose 1,5-bisphosphate + O2 = 2-phosphoglycolate + (2R)-3-phosphoglycerate + 2 H(+). In terms of biological role, ruBisCO catalyzes two reactions: the carboxylation of D-ribulose 1,5-bisphosphate, the primary event in carbon dioxide fixation, as well as the oxidative fragmentation of the pentose substrate in the photorespiration process. Both reactions occur simultaneously and in competition at the same active site. This is Ribulose bisphosphate carboxylase large chain from Spirogyra maxima (Green alga).